A 302-amino-acid chain; its full sequence is Glutaminase (302 aa).

Substrate contacts are provided by S61, N111, E155, N162, Y186, Y238, and V256.

It belongs to the glutaminase family. Homotetramer.

It carries out the reaction L-glutamine + H2O = L-glutamate + NH4(+). The sequence is that of Glutaminase from Pseudomonas fluorescens (strain SBW25).